The following is a 403-amino-acid chain: uncharacterized protein (403 aa).

A run of 6 helical transmembrane segments spans residues 31 to 51 (FLIA…IGSF), 186 to 206 (LPIG…GIIV), 238 to 258 (ISAV…PIII), 268 to 288 (LAIF…SLLC), 303 to 323 (LISP…TIMV), and 355 to 375 (LIEI…SFIL).

It to B.subtilis YhaP.

It is found in the cell membrane. This is an uncharacterized protein from Methanocaldococcus jannaschii (strain ATCC 43067 / DSM 2661 / JAL-1 / JCM 10045 / NBRC 100440) (Methanococcus jannaschii).